The sequence spans 298 residues: MFKSGFVAILGRPNVGKSTFLNHVMGQKIAIMSDKAQTTRNKIMGIYTTETEQIVFIDTPGIHKPKTALGDFMVESAYSTLREVETVLFMVPADEKRGKGDDMIIERLKAAKIPVILVINKIDKVHPDQLLEQIDDFRSQMDFKEVVPISALEGNNVPTLIKLLTDNLEEGFQYFPEDQITDHPERFLVSEMVREKVLHLTQQEVPHSVAVVVESMKRDEETDKVHIRATIMVERDSQKGIIIGKQGAMLKKIGKMARRDIELMLGDKVYLETWVKVKKNWRDKKLDLADFGYNEKEY.

Residues 3 to 170 (KSGFVAILGR…IKLLTDNLEE (168 aa)) enclose the Era-type G domain. The tract at residues 11–18 (GRPNVGKS) is G1. A GTP-binding site is contributed by 11-18 (GRPNVGKS). The segment at 37-41 (QTTRN) is G2. The G3 stretch occupies residues 58-61 (DTPG). Residues 58–62 (DTPGI) and 120–123 (NKID) each bind GTP. Residues 120 to 123 (NKID) are G4. A G5 region spans residues 149–151 (ISA). The region spanning 201–279 (TQQEVPHSVA…YLETWVKVKK (79 aa)) is the KH type-2 domain.

This sequence belongs to the TRAFAC class TrmE-Era-EngA-EngB-Septin-like GTPase superfamily. Era GTPase family. Monomer.

The protein resides in the cytoplasm. Its subcellular location is the cell membrane. Functionally, an essential GTPase that binds both GDP and GTP, with rapid nucleotide exchange. Plays a role in 16S rRNA processing and 30S ribosomal subunit biogenesis and possibly also in cell cycle regulation and energy metabolism. This is GTPase Era from Streptococcus pyogenes serotype M3 (strain ATCC BAA-595 / MGAS315).